A 334-amino-acid polypeptide reads, in one-letter code: Proline-serine-threonine phosphatase-interacting protein 2 (334 aa).

The region spanning 4 to 264 is the F-BAR domain; it reads SLFKGNFWST…SLETCSIEKD (261 aa). The stretch at 66–163 forms a coiled coil; it reads GQSEINTLKR…AEQAVHRSAN (98 aa). Positions 288–322 are disordered; the sequence is YSPQRNAAPPGKTTGPNPARRGPLPVPKRIPDDPD. Residues Tyr323 and Tyr329 each carry the phosphotyrosine modification.

Post-translationally, phosphorylated on tyrosine. Expressed in macrophage-containing tissues, including bone marrow, spleen, liver, kidney, intestine and brain.

Its subcellular location is the cytoplasm. It localises to the membrane. Its function is as follows. Binds to F-actin. May be involved in regulation of the actin cytoskeleton. The protein is Proline-serine-threonine phosphatase-interacting protein 2 (Pstpip2) of Mus musculus (Mouse).